A 163-amino-acid polypeptide reads, in one-letter code: MSTETKNYITPAGWQALKDELYQLVNKERPEIVQIVNWAAGNGDRSENGDYLYGKRRMREIDRRIRFLTKRLEAAVVVDPELREATDQVFFGATVGLLRGDGREQTVKIVGIDEIDTAQNKISWISPLARCLIKAREGDEVVLNTPEGREEIEILSVEYIKID.

Residues 54 to 76 (GKRRMREIDRRIRFLTKRLEAAV) adopt a coiled-coil conformation.

It belongs to the GreA/GreB family. GreB subfamily.

In terms of biological role, necessary for efficient RNA polymerase transcription elongation past template-encoded arresting sites. The arresting sites in DNA have the property of trapping a certain fraction of elongating RNA polymerases that pass through, resulting in locked ternary complexes. Cleavage of the nascent transcript by cleavage factors such as GreA or GreB allows the resumption of elongation from the new 3'terminus. GreB releases sequences of up to 9 nucleotides in length. The polypeptide is Transcription elongation factor GreB (Neisseria meningitidis serogroup A / serotype 4A (strain DSM 15465 / Z2491)).